Here is a 768-residue protein sequence, read N- to C-terminus: P-selectin (768 aa).

The N-terminal stretch at methionine 1–alanine 41 is a signal peptide. Residues tryptophan 42–alanine 709 are Extracellular-facing. The C-type lectin domain occupies valine 58–cysteine 158. Disulfide bonds link cysteine 60/cysteine 158, cysteine 131/cysteine 150, cysteine 163/cysteine 174, cysteine 168/cysteine 183, cysteine 185/cysteine 194, cysteine 200/cysteine 244, cysteine 230/cysteine 257, cysteine 262/cysteine 306, cysteine 292/cysteine 319, cysteine 324/cysteine 368, cysteine 354/cysteine 381, cysteine 386/cysteine 430, cysteine 416/cysteine 443, cysteine 448/cysteine 492, cysteine 478/cysteine 505, cysteine 510/cysteine 554, cysteine 540/cysteine 567, cysteine 580/cysteine 624, cysteine 610/cysteine 637, cysteine 642/cysteine 686, and cysteine 672/cysteine 699. Ca(2+) is bound by residues glutamate 121, asparagine 123, and asparagine 124. Asparagine 123 serves as a coordination point for a carbohydrate. 2 residues coordinate a carbohydrate: glutamate 133 and asparagine 146. Positions 146 and 147 each coordinate Ca(2+). The 37-residue stretch at tyrosine 159 to glutamate 195 folds into the EGF-like domain. 8 Sushi domains span residues lysine 198 to alanine 259, valine 260 to alanine 321, isoleucine 322 to alanine 383, leucine 384 to alanine 445, valine 446 to alanine 507, isoleucine 508 to glycine 569, valine 578 to alanine 639, and valine 640 to alanine 701. Asparagine 398 carries N-linked (GlcNAc...) asparagine glycosylation. Asparagine 603 carries N-linked (GlcNAc...) asparagine glycosylation. Residues asparagine 654, asparagine 661, and asparagine 679 are each glycosylated (N-linked (GlcNAc...) asparagine). A helical transmembrane segment spans residues leucine 710–leucine 733. The Cytoplasmic portion of the chain corresponds to arginine 734 to proline 768. The S-palmitoyl cysteine; alternate moiety is linked to residue cysteine 745. Residue cysteine 745 is the site of S-stearoyl cysteine; alternate attachment. An Endocytosis signal motif is present at residues tyrosine 756–phenylalanine 759. The interaction with SNX17 stretch occupies residues phenylalanine 759–proline 768.

The protein belongs to the selectin/LECAM family. As to quaternary structure, interacts with SNX17. Interacts with SELPLG/PSGL1 and PODXL2 and mediates neutrophil adhesion and leukocyte rolling. This interaction requires the sialyl-Lewis X epitope of SELPLG and PODXL2, and specific tyrosine sulfation on SELPLG. Interacts (via C-type lectin domain) with alpha-IIb/beta3 integrin ITGA2B:ITGB3 and alpha-V/beta-3 integrin ITGAV:ITGB3. Interacts with alpha5/beta1 integrin ITGA5:ITGB1 and alpha4/beta1 integrin ITGA4:ITGB. As to expression, stored in the alpha-granules of platelets and Weibel-Palade bodies of endothelial cells. Upon cell activation by agonists, P-selectin is transported rapidly to the cell surface.

It localises to the cell membrane. Ca(2+)-dependent receptor for myeloid cells that binds to carbohydrates on neutrophils and monocytes. Mediates the interaction of activated endothelial cells or platelets with leukocytes. The ligand recognized is sialyl-Lewis X. Mediates rapid rolling of leukocyte rolling over vascular surfaces during the initial steps in inflammation through interaction with SELPLG. Mediates cell-cell interactions and cell adhesion via the interaction with integrin alpha-IIb/beta3 (ITGA2B:ITGB3) and integrin alpha-V/beta-3 (ITGAV:ITGB3). This is P-selectin (Selp) from Mus musculus (Mouse).